We begin with the raw amino-acid sequence, 310 residues long: Translocator protein BipD (310 aa).

2 coiled-coil regions span residues 127 to 171 (DPIL…LQDY) and 250 to 299 (DTAR…AIST).

The protein belongs to the invasin protein D family.

Its subcellular location is the secreted. In terms of biological role, required for invasion of epithelial cells, as well as for survival within host cells, escape from endocytic vesicles and subsequent actin-tail formation. Probably regulates the secretion of effectors BipB and BipC and their final integration into the target cell membrane. The chain is Translocator protein BipD (bipD) from Burkholderia pseudomallei (strain 1106a).